We begin with the raw amino-acid sequence, 91 residues long: Aspartyl/glutamyl-tRNA(Asn/Gln) amidotransferase subunit C (91 aa).

A disordered region spans residues 68-91; sequence LDQDDALANAPETEDGRFKGPNVS.

Belongs to the GatC family. In terms of assembly, heterotrimer of A, B and C subunits.

It catalyses the reaction L-glutamyl-tRNA(Gln) + L-glutamine + ATP + H2O = L-glutaminyl-tRNA(Gln) + L-glutamate + ADP + phosphate + H(+). It carries out the reaction L-aspartyl-tRNA(Asn) + L-glutamine + ATP + H2O = L-asparaginyl-tRNA(Asn) + L-glutamate + ADP + phosphate + 2 H(+). In terms of biological role, allows the formation of correctly charged Asn-tRNA(Asn) or Gln-tRNA(Gln) through the transamidation of misacylated Asp-tRNA(Asn) or Glu-tRNA(Gln) in organisms which lack either or both of asparaginyl-tRNA or glutaminyl-tRNA synthetases. The reaction takes place in the presence of glutamine and ATP through an activated phospho-Asp-tRNA(Asn) or phospho-Glu-tRNA(Gln). The polypeptide is Aspartyl/glutamyl-tRNA(Asn/Gln) amidotransferase subunit C (Halobacterium salinarum (strain ATCC 29341 / DSM 671 / R1)).